The sequence spans 339 residues: Transaldolase (339 aa).

Lys-135 acts as the Schiff-base intermediate with substrate in catalysis.

This sequence belongs to the transaldolase family. Type 1 subfamily. In terms of assembly, homodimer.

It localises to the cytoplasm. It catalyses the reaction D-sedoheptulose 7-phosphate + D-glyceraldehyde 3-phosphate = D-erythrose 4-phosphate + beta-D-fructose 6-phosphate. Its pathway is carbohydrate degradation; pentose phosphate pathway; D-glyceraldehyde 3-phosphate and beta-D-fructose 6-phosphate from D-ribose 5-phosphate and D-xylulose 5-phosphate (non-oxidative stage): step 2/3. Functionally, transaldolase is important for the balance of metabolites in the pentose-phosphate pathway. This is Transaldolase from Prochlorococcus marinus (strain MIT 9211).